The sequence spans 431 residues: Adenylosuccinate synthetase (431 aa).

Residues 12-18 (GDEGKGK) and 40-42 (GHT) contribute to the GTP site. The Proton acceptor role is filled by aspartate 13. Mg(2+)-binding residues include aspartate 13 and glycine 40. IMP contacts are provided by residues 13–16 (DEGK), 38–41 (NAGH), threonine 128, arginine 142, glutamine 223, threonine 238, and arginine 301. Histidine 41 (proton donor) is an active-site residue. 297–303 (TVTGRPR) contributes to the substrate binding site. GTP is bound by residues arginine 303, 329–331 (SID), and 411–413 (SVG).

This sequence belongs to the adenylosuccinate synthetase family. As to quaternary structure, homodimer. The cofactor is Mg(2+).

It localises to the cytoplasm. It catalyses the reaction IMP + L-aspartate + GTP = N(6)-(1,2-dicarboxyethyl)-AMP + GDP + phosphate + 2 H(+). It participates in purine metabolism; AMP biosynthesis via de novo pathway; AMP from IMP: step 1/2. Functionally, plays an important role in the de novo pathway of purine nucleotide biosynthesis. Catalyzes the first committed step in the biosynthesis of AMP from IMP. The polypeptide is Adenylosuccinate synthetase (Lacticaseibacillus casei (strain BL23) (Lactobacillus casei)).